The chain runs to 231 residues: Aldehyde decarbonylase (231 aa).

Glu32, Glu60, His63, Glu115, and His147 together coordinate Fe cation.

Belongs to the aldehyde decarbonylase family. The cofactor is Binds 2 metal cations per subunit. The catalytic dinuclear metal-binding site could be either a di-iron or a manganese-iron cofactor..

The catalysed reaction is a long-chain fatty aldehyde + 2 NADPH + O2 + H(+) = a long-chain alkane + formate + 2 NADP(+) + H2O. Functionally, catalyzes the decarbonylation of fatty aldehydes to alkanes. Requires the presence of ferredoxin, ferredoxin reductase and NADPH for in vitro decarbonylase activity. Involved in the biosynthesis of alkanes, mainly heptadecane and pentadecane. The protein is Aldehyde decarbonylase of Synechococcus elongatus (strain ATCC 33912 / PCC 7942 / FACHB-805) (Anacystis nidulans R2).